The primary structure comprises 212 residues: Large ribosomal subunit protein uL3 (212 aa).

Position 153 is an N5-methylglutamine (Gln-153).

It belongs to the universal ribosomal protein uL3 family. Part of the 50S ribosomal subunit. Forms a cluster with proteins L14 and L19. Post-translationally, methylated by PrmB.

One of the primary rRNA binding proteins, it binds directly near the 3'-end of the 23S rRNA, where it nucleates assembly of the 50S subunit. The polypeptide is Large ribosomal subunit protein uL3 (Dechloromonas aromatica (strain RCB)).